Consider the following 460-residue polypeptide: Spermatogenesis-defective protein 39 homolog (460 aa).

At T21 the chain carries Phosphothreonine. Positions 70 to 101 (SIKETAGSSGSTSEGREQMKGRNSFYTQLPKP) are disordered. Positions 73-82 (ETAGSSGSTS) are enriched in low complexity. Phosphothreonine is present on T115. 3 positions are modified to phosphoserine: S119, S122, and S128. The span at 121–133 (QSLSDALSDTPAK) shows a compositional bias: polar residues. The segment at 121-141 (QSLSDALSDTPAKTYSPELGR) is disordered. Residue T130 is modified to Phosphothreonine.

The protein belongs to the SPE39 family. Interacts with VPS33B. Associates with the homotypic fusion and vacuole protein sorting (HOPS) complex; impaired by VPS33B. Interacts with RAB11A.

It is found in the cytoplasm. Its subcellular location is the cytoplasmic vesicle. It localises to the early endosome. The protein resides in the recycling endosome. The protein localises to the late endosome. Functionally, proposed to be involved in endosomal maturation implicating in part VPS33B. In epithelial cells, the VPS33B:VIPAS39 complex may play a role in the apical RAB11A-dependent recycling pathway and in the maintenance of the apical-basolateral polarity. May play a role in lysosomal trafficking, probably via association with the core HOPS complex in a discrete population of endosomes; the functions seems to be independent of VPS33B. May play a role in vesicular trafficking during spermatogenesis. May be involved in direct or indirect transcriptional regulation of E-cadherin. The polypeptide is Spermatogenesis-defective protein 39 homolog (Vipas39) (Rattus norvegicus (Rat)).